We begin with the raw amino-acid sequence, 1798 residues long: Laminin subunit beta-2 (1798 aa).

A signal peptide spans 1–32 (MELTSRERGRGQPLPWELRLGLLLSVLAATLA). One can recognise a Laminin N-terminal domain in the interval 43-282 (SRGSCYPATG…ALYELVVRGN (240 aa)). Asparagine 248 is a glycosylation site (N-linked (GlcNAc...) asparagine). Cystine bridges form between cysteine 283–cysteine 292, cysteine 285–cysteine 310, cysteine 312–cysteine 321, cysteine 324–cysteine 344, cysteine 347–cysteine 356, cysteine 349–cysteine 374, cysteine 377–cysteine 386, cysteine 389–cysteine 407, cysteine 410–cysteine 423, cysteine 412–cysteine 438, cysteine 440–cysteine 449, cysteine 452–cysteine 467, cysteine 470–cysteine 484, cysteine 472–cysteine 491, cysteine 493–cysteine 502, cysteine 505–cysteine 519, cysteine 522–cysteine 534, cysteine 524–cysteine 541, and cysteine 543–cysteine 552. Laminin EGF-like domains follow at residues 283–346 (CFCY…ACRK), 347–409 (CECH…VCRS), 410–469 (CDCD…GCRR), and 470–521 (CQCN…GCRP). An N-linked (GlcNAc...) asparagine glycan is attached at asparagine 368. The 31-residue stretch at 522 to 552 (CDCDVGGALDPQCDEGTGQCHCRQHMVGRRC) folds into the Laminin EGF-like 5; truncated domain. The 217-residue stretch at 561–777 (RPFLDHLIWE…LLISLSTLIY (217 aa)) folds into the Laminin IV type B domain. Disulfide bonds link cysteine 783-cysteine 795, cysteine 785-cysteine 802, cysteine 804-cysteine 813, cysteine 816-cysteine 828, cysteine 831-cysteine 843, cysteine 833-cysteine 850, cysteine 852-cysteine 861, cysteine 864-cysteine 874, cysteine 877-cysteine 886, cysteine 879-cysteine 893, cysteine 896-cysteine 905, cysteine 908-cysteine 924, cysteine 927-cysteine 943, cysteine 929-cysteine 954, cysteine 956-cysteine 965, cysteine 968-cysteine 983, cysteine 986-cysteine 1000, cysteine 988-cysteine 1007, cysteine 1010-cysteine 1019, cysteine 1022-cysteine 1035, cysteine 1038-cysteine 1058, cysteine 1040-cysteine 1065, cysteine 1067-cysteine 1076, cysteine 1079-cysteine 1092, cysteine 1095-cysteine 1107, cysteine 1097-cysteine 1114, cysteine 1116-cysteine 1125, cysteine 1128-cysteine 1140, cysteine 1143-cysteine 1155, cysteine 1145-cysteine 1162, cysteine 1164-cysteine 1173, and cysteine 1176-cysteine 1187. Laminin EGF-like domains lie at 783–830 (CQCN…GCQA), 831–876 (CQCS…SCRP), 877–926 (CVCN…QCRP), 927–985 (CPCP…RCQL), 986–1037 (CECS…SCHR), 1038–1094 (CTCN…GCQP), 1095–1142 (CACH…QCHA), and 1143–1189 (CDCD…ACHP). The N-linked (GlcNAc...) asparagine glycan is linked to asparagine 1085. Positions 1190–1409 (CHACFGDWDR…LSLTDINELV (220 aa)) are domain II. Residues asparagine 1249, asparagine 1308, and asparagine 1348 are each glycosylated (N-linked (GlcNAc...) asparagine). A coiled-coil region spans residues 1253 to 1319 (ASTAQLVEAT…TLRQLDQHLD (67 aa)). Residues 1338–1364 (SQSAEAERRANTSALAVPSPVSNSASA) form a disordered region. The segment covering 1350–1363 (SALAVPSPVSNSAS) has biased composition (low complexity). The segment at 1410 to 1442 (CGAPGDAPCATSPCGGAGCRDEDGQPRCGGLSC) is domain alpha. The tract at residues 1443–1798 (NGAAATADLA…LQVQIYNTCQ (356 aa)) is domain I. Residues 1472-1526 (SILSRVAETRRQASEAQQRAQAALDKANASRGQVEQANQELQELIQSVKDFLNQE) adopt a coiled-coil conformation. Asparagine 1499 carries N-linked (GlcNAc...) asparagine glycosylation. Residue serine 1532 is modified to Phosphoserine; by FAM20C. A coiled-coil region spans residues 1577–1790 (VGDVRRAEQL…RSVLQAINLQ (214 aa)).

Laminin is a complex glycoprotein, consisting of three different polypeptide chains (alpha, beta, gamma), which are bound to each other by disulfide bonds into a cross-shaped molecule comprising one long and three short arms with globules at each end. Beta-2 is a subunit of laminin-3 (laminin-121 or S-laminin), laminin-4 (laminin-221 or S-merosin), laminin-7 (laminin-321 or KS-laminin), laminin-9 (laminin-421), laminin-11 (laminin-521), laminin-14 (laminin-423) and laminin-15 (laminin-523).

Its subcellular location is the secreted. The protein resides in the extracellular space. The protein localises to the extracellular matrix. It is found in the basement membrane. Its function is as follows. Binding to cells via a high affinity receptor, laminin is thought to mediate the attachment, migration and organization of cells into tissues during embryonic development by interacting with other extracellular matrix components. The sequence is that of Laminin subunit beta-2 (LAMB2) from Homo sapiens (Human).